A 231-amino-acid polypeptide reads, in one-letter code: Succinate dehydrogenase subunit 5, mitochondrial (231 aa).

The N-terminal 63 residues, 1–63 (MAAALRSSCA…AFSWNLRRLF (63 aa)), are a transit peptide targeting the mitochondrion.

In terms of assembly, component of complex II composed of eight subunits in plants: four classical SDH subunits SDH1, SDH2, SDH3 and SDH4 (a flavoprotein (FP), an iron-sulfur protein (IP), and a cytochrome b composed of a large and a small subunit.), as well as four subunits unknown in mitochondria from bacteria and heterotrophic eukaryotes.

The protein localises to the mitochondrion inner membrane. Its pathway is carbohydrate metabolism; tricarboxylic acid cycle. The polypeptide is Succinate dehydrogenase subunit 5, mitochondrial (Oryza sativa subsp. japonica (Rice)).